A 468-amino-acid polypeptide reads, in one-letter code: Tapasin-related protein (468 aa).

The N-terminal stretch at 1-18 (MGTQEGWCLLLCLALSGA) is a signal peptide. Residues 19–405 (AETKPHPAER…STQVVPPERR (387 aa)) lie on the Lumenal side of the membrane. In terms of domain architecture, Ig-like V-type spans 181–297 (PQGTVRTAVE…SLYRAQQIIQ (117 aa)). Intrachain disulfides connect Cys212–Cys283 and Cys321–Cys382. N-linked (GlcNAc...) asparagine glycosylation is present at Asn265. The region spanning 304-394 (PKVRLSLANE…MHISLEEPLG (91 aa)) is the Ig-like C1-type domain. A helical membrane pass occupies residues 406 to 426 (TALGVIFASSLFLLALLFLGL). Topologically, residues 427–468 (QRRQAPTRVGLLQAERWKTTSCADTQSSHLHEDRTACVSQPS) are cytoplasmic.

As to quaternary structure, interacts with peptide-free HLA-A*02-B2M complexes or those loaded with low affinity peptides, likely facilitating peptide exchange onto higher affinity peptides. Interacts with MR1 in a ligand-independent way; this interaction may stabilize MR1 pool and facilitate ligand loading and dissociation.

It is found in the cell membrane. The protein resides in the endoplasmic reticulum membrane. Its subcellular location is the microsome membrane. The protein localises to the golgi apparatus membrane. In terms of biological role, component of the antigen processing and presentation pathway, which binds to MHC class I coupled with beta2-microglobulin/B2M. Association between TAPBPR and MHC class I occurs in the absence of a functional peptide-loading complex (PLC). Expression seems to slow down and down-regulate MHC class I surface expression. The sequence is that of Tapasin-related protein (TAPBPL) from Pongo abelii (Sumatran orangutan).